The chain runs to 215 residues: Fibroblast growth factor 17 (215 aa).

The first 22 residues, 1 to 22 (MYGINQRYLYISFHFFVVWCHA), serve as a signal peptide directing secretion. Residue Asn-137 is glycosylated (N-linked (GlcNAc...) asparagine).

The protein belongs to the heparin-binding growth factors family.

It localises to the secreted. Its function is as follows. Involved in dorsal-ventral embryonic patterning, by promoting expression of bone morphogenetic protein (BMP) antagonists such as chd. Also involved in anterior-posterior neural patterning and in mesoderm induction. In Danio rerio (Zebrafish), this protein is Fibroblast growth factor 17 (fgf17).